Reading from the N-terminus, the 183-residue chain is Beta-defensin 129 (183 aa).

The signal sequence occupies residues 1 to 19 (MKLLFPIFASLMLQYQVNT). 3 cysteine pairs are disulfide-bonded: Cys-27–Cys-53, Cys-34–Cys-48, and Cys-38–Cys-54. Residues 141-183 (TATSTKSNTKESRDSATASSPPAPPPPNILPTPSLELEEAEEQ) form a disordered region. Residues 161-170 (PPAPPPPNIL) show a composition bias toward pro residues.

The protein belongs to the beta-defensin family.

Its subcellular location is the secreted. In terms of biological role, has antibacterial activity. The chain is Beta-defensin 129 (DEFB129) from Gorilla gorilla gorilla (Western lowland gorilla).